The sequence spans 255 residues: MSGHSKWATTKHKKAIIDSRRAKSFAKLIKNIEVAAKIGGADMSGNPTLVDAVQKAKKTSVPNDNIDRAVKRGAGLLGEVVDYQTIMYEGYAASGVAMLVECLTDNKNRAAAEVRTAMSRNGGTMADPGSVAYNFHRKGVIAVPHDEAPTEDDVLAAVLDAGAEDVTDHGEVFEIRCEPSDMVAVRQALQEAGIDYDSADVEFVPQVKVEVDLETARKVNKLVDAMEDLDDVQNIYVNSDVPADVQAALDDDDEE.

Belongs to the TACO1 family.

It localises to the cytoplasm. In Clavibacter michiganensis subsp. michiganensis (strain NCPPB 382), this protein is Probable transcriptional regulatory protein CMM_1817.